The following is a 152-amino-acid chain: Aspartate 1-decarboxylase (152 aa).

Ser-24 functions as the Schiff-base intermediate with substrate; via pyruvic acid in the catalytic mechanism. Ser-24 carries the post-translational modification Pyruvic acid (Ser). Thr-56 provides a ligand contact to substrate. Tyr-57 serves as the catalytic Proton donor. 72 to 74 (GAA) is a substrate binding site.

Belongs to the PanD family. In terms of assembly, heterooctamer of four alpha and four beta subunits. Requires pyruvate as cofactor. Post-translationally, is synthesized initially as an inactive proenzyme, which is activated by self-cleavage at a specific serine bond to produce a beta-subunit with a hydroxyl group at its C-terminus and an alpha-subunit with a pyruvoyl group at its N-terminus.

Its subcellular location is the cytoplasm. It catalyses the reaction L-aspartate + H(+) = beta-alanine + CO2. It participates in cofactor biosynthesis; (R)-pantothenate biosynthesis; beta-alanine from L-aspartate: step 1/1. Functionally, catalyzes the pyruvoyl-dependent decarboxylation of aspartate to produce beta-alanine. This chain is Aspartate 1-decarboxylase, found in Methylobacterium nodulans (strain LMG 21967 / CNCM I-2342 / ORS 2060).